Here is a 311-residue protein sequence, read N- to C-terminus: Nudix hydrolase 9 (311 aa).

Residues 131 to 298 (SSPLGNGAVI…GFALYELMLQ (168 aa)) enclose the Nudix hydrolase domain. Residues 192–213 (LNKKVTQEMFDSIICEVVEETG) carry the Nudix box motif. E207 and E211 together coordinate Mg(2+).

This sequence belongs to the Nudix hydrolase family. Mg(2+) is required as a cofactor. Requires Mn(2+) as cofactor. In terms of tissue distribution, expressed in roots, stems and leaves.

Probably mediates the hydrolysis of some nucleoside diphosphate derivatives. The sequence is that of Nudix hydrolase 9 (NUDT9) from Arabidopsis thaliana (Mouse-ear cress).